The sequence spans 69 residues: Putative membrane protein insertion efficiency factor (69 aa).

Belongs to the UPF0161 family.

The protein localises to the cell inner membrane. In terms of biological role, could be involved in insertion of integral membrane proteins into the membrane. This chain is Putative membrane protein insertion efficiency factor, found in Laribacter hongkongensis (strain HLHK9).